The following is a 121-amino-acid chain: Protein yippee-like 5 (121 aa).

One can recognise a Yippee domain in the interval 13–110 (RLFSCANCDT…LERALVRESE (98 aa)). Zn(2+) contacts are provided by cysteine 17, cysteine 20, cysteine 73, and cysteine 76. Serine 118 is subject to Phosphoserine.

Belongs to the yippee family. As to quaternary structure, identified in the CTLH complex that contains GID4, RANBP9 and/or RANBP10, MKLN1, MAEA, RMND5A (or alternatively its paralog RMND5B), GID8, ARMC8, WDR26 and YPEL5. Within this complex, MAEA, RMND5A (or alternatively its paralog RMND5B), GID8, WDR26, and RANBP9 and/or RANBP10 form the catalytic core, while GID4, MKLN1, ARMC8 and YPEL5 have ancillary roles. Interacts with RANBP9 and RANBP10.

It is found in the nucleus. It localises to the cytoplasm. The protein resides in the cytoskeleton. The protein localises to the microtubule organizing center. Its subcellular location is the centrosome. It is found in the spindle pole. It localises to the midbody. Component of the CTLH E3 ubiquitin-protein ligase complex that selectively accepts ubiquitin from UBE2H and mediates ubiquitination and subsequent proteasomal degradation of the transcription factor HBP1. Required for normal cell proliferation. This chain is Protein yippee-like 5 (YPEL5), found in Bos taurus (Bovine).